We begin with the raw amino-acid sequence, 71 residues long: Brevinin-1SN1 (71 aa).

Positions 1–22 (MFTMKKPLLLLFFLGTINLSLC) are cleaved as a signal peptide. A propeptide spans 23 to 45 (EEERNADEEEKRDGDDEMDAEVE) (removed in mature form). Residues cysteine 65 and cysteine 71 are joined by a disulfide bond.

Belongs to the frog skin active peptide (FSAP) family. Brevinin subfamily. As to expression, expressed by the skin glands.

It is found in the secreted. Antimicrobial peptide. Active against some Gram-negative and a variety of Gram-positive bacterial strains. Active against fungus C.glabrata 090902 but not against C.albicans ATCC 10231. Shows hemolytic activity against human erythrocytes. In Sylvirana spinulosa (Fine-spined frog), this protein is Brevinin-1SN1.